Consider the following 788-residue polypeptide: Ciliated left-right organizer metallopeptidase (788 aa).

Positions 1-20 (MLLLLLLLLLLPPLVLRVAA) are cleaved as a signal peptide. Residues 21-735 (SRCLHDETQK…DHNPSMTHLR (715 aa)) are Extracellular-facing. Low complexity predominate over residues 40–56 (SQLPSKSRSSSLTLPSS). Positions 40 to 59 (SQLPSKSRSSSLTLPSSRDP) are disordered. Position 305 (His305) interacts with Zn(2+). Residue Glu306 is part of the active site. His309 is a Zn(2+) binding site. N-linked (GlcNAc...) asparagine glycosylation is present at Asn333. His385 contributes to the Zn(2+) binding site. 4 N-linked (GlcNAc...) asparagine glycosylation sites follow: Asn425, Asn491, Asn524, and Asn713. Residues 736 to 756 (LSMGLCLMLLILVGVMGTTAY) traverse the membrane as a helical segment. The Cytoplasmic segment spans residues 757 to 788 (QKRATLPVRPSASYHSPELHSTRVPVRGIREV). The disordered stretch occupies residues 767–788 (SASYHSPELHSTRVPVRGIREV).

This sequence belongs to the peptidase M8 family. Zn(2+) serves as cofactor.

The protein localises to the membrane. Functionally, putative metalloproteinase that plays a role in left-right patterning process. The polypeptide is Ciliated left-right organizer metallopeptidase (Homo sapiens (Human)).